The chain runs to 331 residues: D-alanine--D-alanine ligase (331 aa).

One can recognise an ATP-grasp domain in the interval 122–328; it reads KLWYDAIGIP…FHEFLADCIE (207 aa). Residue 152-207 participates in ATP binding; sequence AFDKWGKLFVKAARQGSSVGCYSVTNIEQLSDAIDKAFGFSHQVLVEKAVKPRELE. Mg(2+)-binding residues include Asp282, Glu295, and Asn297.

It belongs to the D-alanine--D-alanine ligase family. Mg(2+) is required as a cofactor. The cofactor is Mn(2+).

It localises to the cytoplasm. The enzyme catalyses 2 D-alanine + ATP = D-alanyl-D-alanine + ADP + phosphate + H(+). The protein operates within cell wall biogenesis; peptidoglycan biosynthesis. Functionally, cell wall formation. The chain is D-alanine--D-alanine ligase from Vibrio vulnificus (strain YJ016).